Here is a 440-residue protein sequence, read N- to C-terminus: L-gulonolactone oxidase (440 aa).

The 171-residue stretch at 17-187 (YSCEPELYFE…LNVTIQCVPA (171 aa)) folds into the FAD-binding PCMH-type domain. Residue His54 is modified to Pros-8alpha-FAD histidine. A helical transmembrane segment spans residues 245-267 (WFWNYAIGYYLLEFLLWISVFVP).

It belongs to the oxygen-dependent FAD-linked oxidoreductase family. Requires FAD as cofactor.

The protein localises to the microsome membrane. Its subcellular location is the endoplasmic reticulum membrane. It carries out the reaction L-gulono-1,4-lactone + O2 = L-ascorbate + H2O2 + H(+). It functions in the pathway cofactor biosynthesis; L-ascorbate biosynthesis via UDP-alpha-D-glucuronate pathway; L-ascorbate from UDP-alpha-D-glucuronate: step 4/4. Functionally, oxidizes L-gulono-1,4-lactone to hydrogen peroxide and L-xylo-hexulonolactone which spontaneously isomerizes to L-ascorbate. This Scyliorhinus torazame (Cloudy catshark) protein is L-gulonolactone oxidase (GULO).